The sequence spans 313 residues: MFTPVRRRVRTAALALSAAAALVLGSTAASGASATPSPAPAPAPAPVKQGPTSVAYVEVNNNSMLNVGKYTLADGGGNAFDVAVIFAANINYDTGTKTAYLHFNENVQRVLDNAVTQIRPLQQQGIKVLLSVLGNHQGAGFANFPSQQAASAFAKQLSDAVAKYGLDGVDFDDEYAEYGNNGTAQPNDSSFVHLVTALRANMPDKIISLYNIGPAASRLSYGGVDVSDKFDYAWNPYYGTWQVPGIALPKAQLSPAAVEIGRTSRSTVADLARRTVDEGYGVYLTYNLDGGDRTADVSAFTRELYGSEAVRTP.

A signal peptide (or 44) is located at residues 1–42 (MFTPVRRRVRTAALALSAAAALVLGSTAASGASATPSPAPAP). A GH18 domain is found at 51-307 (PTSVAYVEVN…SAFTRELYGS (257 aa)). The Proton donor role is filled by Glu174.

This sequence belongs to the glycosyl hydrolase 18 family.

The catalysed reaction is an N(4)-(oligosaccharide-(1-&gt;3)-[oligosaccharide-(1-&gt;6)]-beta-D-Man-(1-&gt;4)-beta-D-GlcNAc-(1-&gt;4)-alpha-D-GlcNAc)-L-asparaginyl-[protein] + H2O = an oligosaccharide-(1-&gt;3)-[oligosaccharide-(1-&gt;6)]-beta-D-Man-(1-&gt;4)-D-GlcNAc + N(4)-(N-acetyl-beta-D-glucosaminyl)-L-asparaginyl-[protein]. Functionally, cleaves asparagine-linked oligomannose and hybrid, but not complex, oligosaccharides from glycoproteins. The protein is Endo-beta-N-acetylglucosaminidase H of Streptomyces plicatus.